The primary structure comprises 291 residues: Lectin (291 aa).

The signal sequence occupies residues 1-28; sequence MGISKKSQLVPLLAFITMFLMVVSRVSS. Aspartate 118 contacts Ca(2+). Arginine 138 is a binding site for a carbohydrate. The propeptide at 147–162 is removed in mature form; the sequence is NIIKNSTNLDFNAAYN. 2 residues coordinate Mn(2+): glutamate 170 and aspartate 172. Residues aspartate 172, tyrosine 174, asparagine 176, and aspartate 181 each coordinate Ca(2+). Tyrosine 174 contacts a carbohydrate. 2 residues coordinate Mn(2+): aspartate 181 and histidine 186. Lysine 208 contributes to the Ca(2+) binding site. A carbohydrate is bound at residue serine 228. The propeptide at 281 to 291 is removed in mature form; that stretch reads QLQDLRIASVV.

The protein belongs to the leguminous lectin family. In terms of processing, the mature chain consists of residues 163-280 followed by residues 29-147. Concanavalin A-like lectins of the Diocleinae subtribe undergo proteolytic processing referred to as circular permutation. The propeptide is split into an N-terminal and a C-terminal part, the gamma and beta chain, respectively. These are then religated in beta-gamma order to form the mature alpha chain. The beta and gamma chains can often be detected in cell extracts.

Functionally, D-mannose-binding lectin that also binds alpha-methyl-D-mannoside with even higher affinity. Has hemagglutinating activity against rabbit erythrocytes. Shows toxicity against the brine shrimp A.nauplii. Induces reversible paw edema and hypernociceptivity in rats. This chain is Lectin, found in Dioclea lasiophylla.